Reading from the N-terminus, the 224-residue chain is MRAIRPFKYFPYSRREDEITVEQTNESKLYVTGTYVGGQYGKMIWNLVNGTDDIRYVGLIRGAELNINGQIVKVPDYLFGRAFGDVYYLLGMSTYMTNPADVPLYTLSVYNNETIGFVFALPPKTTVHVPEYGFIGLINYNAKLIEVKPKELGTYVIIYSPEEYMIYYEEIGQNLGILPTVYMVNSYNVEAGYTGYGFHERVILKIPKSWLNFAVDLTRLLGKI.

This is an uncharacterized protein from Acidianus hospitalis (AFV-1).